The following is a 439-amino-acid chain: Diaminopimelate decarboxylase (439 aa).

At K66 the chain carries N6-(pyridoxal phosphate)lysine. Residues G248 and 290 to 293 contribute to the pyridoxal 5'-phosphate site; that span reads EPGR. The substrate site is built by R293, R330, and Y334. C361 acts as the Proton donor in catalysis. Positions 362 and 390 each coordinate substrate. Y390 provides a ligand contact to pyridoxal 5'-phosphate.

Belongs to the Orn/Lys/Arg decarboxylase class-II family. LysA subfamily. Homodimer. Requires pyridoxal 5'-phosphate as cofactor.

The enzyme catalyses meso-2,6-diaminopimelate + H(+) = L-lysine + CO2. It participates in amino-acid biosynthesis; L-lysine biosynthesis via DAP pathway; L-lysine from DL-2,6-diaminopimelate: step 1/1. Functionally, specifically catalyzes the decarboxylation of meso-diaminopimelate (meso-DAP) to L-lysine. The protein is Diaminopimelate decarboxylase of Bacillus subtilis (strain 168).